We begin with the raw amino-acid sequence, 102 residues long: Putative ubiquitin-like protein FUBI-like protein ENSP00000310146 (102 aa).

In terms of domain architecture, Ubiquitin-like spans 23–99; sequence LCPQVAYVRA…LEVVGRRLGV (77 aa).

The protein is Putative ubiquitin-like protein FUBI-like protein ENSP00000310146 of Homo sapiens (Human).